The primary structure comprises 411 residues: 2,3-bisphosphoglycerate-independent phosphoglycerate mutase (411 aa).

It belongs to the BPG-independent phosphoglycerate mutase family. A-PGAM subfamily. In terms of assembly, homotetramer. It depends on Mg(2+) as a cofactor.

It catalyses the reaction (2R)-2-phosphoglycerate = (2R)-3-phosphoglycerate. It functions in the pathway carbohydrate degradation; glycolysis; pyruvate from D-glyceraldehyde 3-phosphate: step 3/5. Inhibited to approximately 20% by EDTA. Its function is as follows. Catalyzes the interconversion of 2-phosphoglycerate and 3-phosphoglycerate. The polypeptide is 2,3-bisphosphoglycerate-independent phosphoglycerate mutase (apgM) (Pyrococcus furiosus (strain ATCC 43587 / DSM 3638 / JCM 8422 / Vc1)).